The following is a 179-amino-acid chain: Molybdopterin synthase catalytic subunit (179 aa).

Polar residues predominate over residues 1-10 (MTTSEDQTTP). Residues 1–21 (MTTSEDQTTPAHLDPKTYPRH) form a disordered region. Residues 127-128 (HR), Lys143, and 150-152 (KRE) contribute to the substrate site.

Belongs to the MoaE family. MOCS2B subfamily. In terms of assembly, heterotetramer; composed of 2 small (MOCS2A) and 2 large (MOCS2B) subunits.

It is found in the cytoplasm. It catalyses the reaction 2 [molybdopterin-synthase sulfur-carrier protein]-C-terminal-Gly-aminoethanethioate + cyclic pyranopterin phosphate + H2O = molybdopterin + 2 [molybdopterin-synthase sulfur-carrier protein]-C-terminal Gly-Gly + 2 H(+). It functions in the pathway cofactor biosynthesis; molybdopterin biosynthesis. Catalytic subunit of the molybdopterin synthase complex, a complex that catalyzes the conversion of precursor Z into molybdopterin. Acts by mediating the incorporation of 2 sulfur atoms from thiocarboxylated MOCS2A into precursor Z to generate a dithiolene group. This chain is Molybdopterin synthase catalytic subunit, found in Aspergillus oryzae (strain ATCC 42149 / RIB 40) (Yellow koji mold).